The chain runs to 688 residues: Zinc finger protein 770 (688 aa).

A Glycyl lysine isopeptide (Lys-Gly) (interchain with G-Cter in SUMO2) cross-link involves residue lysine 11. 3 consecutive C2H2-type zinc fingers follow at residues 27–49 (YVCN…YLIH), 55–77 (FECD…QLTH), and 81–103 (FKCS…QQLH). Glycyl lysine isopeptide (Lys-Gly) (interchain with G-Cter in SUMO2) cross-links involve residues lysine 112, lysine 121, and lysine 146. 3 C2H2-type zinc fingers span residues 160–182 (HACT…VLIH), 188–210 (FKCV…QLTH), and 216–238 (FQCC…KQIH). Lysine 262 is covalently cross-linked (Glycyl lysine isopeptide (Lys-Gly) (interchain with G-Cter in SUMO2)). The C2H2-type 7; degenerate zinc-finger motif lies at 294-318 (FQCPKCEKCFESEQILNEHSCFPAR). Glycyl lysine isopeptide (Lys-Gly) (interchain with G-Cter in SUMO2) cross-links involve residues lysine 420 and lysine 437. 4 consecutive C2H2-type zinc fingers follow at residues 475–497 (CPCD…YLIH), 503–525 (FGCN…EQTH), 623–645 (YRCS…YLIH), and 651–673 (FECS…QLTH). A Glycyl lysine isopeptide (Lys-Gly) (interchain with G-Cter in SUMO2) cross-link involves residue lysine 681.

This sequence belongs to the krueppel C2H2-type zinc-finger protein family.

Its subcellular location is the nucleus. May be involved in transcriptional regulation. This Pongo abelii (Sumatran orangutan) protein is Zinc finger protein 770 (ZNF770).